Reading from the N-terminus, the 208-residue chain is GTP cyclohydrolase 1 (208 aa).

Cys-89, His-92, and Cys-163 together coordinate Zn(2+).

This sequence belongs to the GTP cyclohydrolase I family. In terms of assembly, homomer.

It catalyses the reaction GTP + H2O = 7,8-dihydroneopterin 3'-triphosphate + formate + H(+). It functions in the pathway cofactor biosynthesis; 7,8-dihydroneopterin triphosphate biosynthesis; 7,8-dihydroneopterin triphosphate from GTP: step 1/1. This chain is GTP cyclohydrolase 1, found in Saccharolobus islandicus (strain Y.N.15.51 / Yellowstone #2) (Sulfolobus islandicus).